Here is a 205-residue protein sequence, read N- to C-terminus: Probable thymidylate kinase (205 aa).

Position 10–17 (10–17 (GIDGSGKT)) interacts with ATP.

It belongs to the thymidylate kinase family.

It catalyses the reaction dTMP + ATP = dTDP + ADP. This Pyrococcus horikoshii (strain ATCC 700860 / DSM 12428 / JCM 9974 / NBRC 100139 / OT-3) protein is Probable thymidylate kinase (tmk).